The chain runs to 192 residues: Adenylate kinase (192 aa).

10–18 (GVPGVGSTT) is an ATP binding site.

Belongs to the archaeal adenylate kinase family. As to quaternary structure, monomer.

It is found in the cytoplasm. The enzyme catalyses AMP + ATP = 2 ADP. This chain is Adenylate kinase, found in Methanococcus vannielii (strain ATCC 35089 / DSM 1224 / JCM 13029 / OCM 148 / SB).